The sequence spans 252 residues: Methionine aminopeptidase (252 aa).

H76 lines the substrate pocket. A divalent metal cation is bound by residues D93, D104, and H168. A substrate-binding site is contributed by H175. Residues E202 and E233 each contribute to the a divalent metal cation site.

It belongs to the peptidase M24A family. Methionine aminopeptidase type 1 subfamily. In terms of assembly, monomer. Co(2+) serves as cofactor. Zn(2+) is required as a cofactor. The cofactor is Mn(2+). It depends on Fe(2+) as a cofactor.

It catalyses the reaction Release of N-terminal amino acids, preferentially methionine, from peptides and arylamides.. In terms of biological role, removes the N-terminal methionine from nascent proteins. The N-terminal methionine is often cleaved when the second residue in the primary sequence is small and uncharged (Met-Ala-, Cys, Gly, Pro, Ser, Thr, or Val). Requires deformylation of the N(alpha)-formylated initiator methionine before it can be hydrolyzed. This is Methionine aminopeptidase from Staphylococcus aureus (strain MRSA252).